The primary structure comprises 692 residues: Elongation factor G (692 aa).

Positions 8–283 (DRYRNIGIMA…AVVDFLPSPL (276 aa)) constitute a tr-type G domain. GTP contacts are provided by residues 17–24 (AHIDAGKT), 81–85 (DTPGH), and 135–138 (NKMD).

It belongs to the TRAFAC class translation factor GTPase superfamily. Classic translation factor GTPase family. EF-G/EF-2 subfamily.

The protein localises to the cytoplasm. Functionally, catalyzes the GTP-dependent ribosomal translocation step during translation elongation. During this step, the ribosome changes from the pre-translocational (PRE) to the post-translocational (POST) state as the newly formed A-site-bound peptidyl-tRNA and P-site-bound deacylated tRNA move to the P and E sites, respectively. Catalyzes the coordinated movement of the two tRNA molecules, the mRNA and conformational changes in the ribosome. The chain is Elongation factor G from Rhodospirillum rubrum (strain ATCC 11170 / ATH 1.1.1 / DSM 467 / LMG 4362 / NCIMB 8255 / S1).